An 85-amino-acid polypeptide reads, in one-letter code: Small ribosomal subunit protein uS17 (85 aa).

The protein belongs to the universal ribosomal protein uS17 family. In terms of assembly, part of the 30S ribosomal subunit.

Its function is as follows. One of the primary rRNA binding proteins, it binds specifically to the 5'-end of 16S ribosomal RNA. This chain is Small ribosomal subunit protein uS17, found in Spiroplasma citri.